A 431-amino-acid chain; its full sequence is Sorting nexin-31 (431 aa).

The PX domain maps to 1–107 (MHICIPVTEE…DYFRKLQMDT (107 aa)).

The protein belongs to the sorting nexin family.

In terms of biological role, may be involved in protein trafficking. The sequence is that of Sorting nexin-31 (snx31) from Xenopus laevis (African clawed frog).